Consider the following 209-residue polypeptide: Large ribosomal subunit protein uL4 (209 aa).

Residues 46-76 (RGTASTKTRGEVSGGGRKPWRQKGTGRARHG) are disordered. A compositionally biased stretch (basic residues) spans 63–76 (KPWRQKGTGRARHG).

This sequence belongs to the universal ribosomal protein uL4 family. As to quaternary structure, part of the 50S ribosomal subunit.

Its function is as follows. One of the primary rRNA binding proteins, this protein initially binds near the 5'-end of the 23S rRNA. It is important during the early stages of 50S assembly. It makes multiple contacts with different domains of the 23S rRNA in the assembled 50S subunit and ribosome. In terms of biological role, forms part of the polypeptide exit tunnel. The chain is Large ribosomal subunit protein uL4 from Halothermothrix orenii (strain H 168 / OCM 544 / DSM 9562).